The chain runs to 446 residues: Serine--tRNA ligase, mitochondrial (446 aa).

251–253 (TAE) contributes to the L-serine binding site. Residues 284 to 286 (RAE) and Val-300 contribute to the ATP site. Glu-307 provides a ligand contact to L-serine. 371 to 374 (EISS) is an ATP binding site. Thr-407 provides a ligand contact to L-serine.

Belongs to the class-II aminoacyl-tRNA synthetase family. Type-1 seryl-tRNA synthetase subfamily. In terms of assembly, homodimer. The tRNA molecule binds across the dimer.

It localises to the mitochondrion matrix. The catalysed reaction is tRNA(Ser) + L-serine + ATP = L-seryl-tRNA(Ser) + AMP + diphosphate + H(+). Its function is as follows. Catalyzes the attachment of serine to tRNA(Ser). This Saccharomyces cerevisiae (strain ATCC 204508 / S288c) (Baker's yeast) protein is Serine--tRNA ligase, mitochondrial (DIA4).